The following is a 47-amino-acid chain: Protein 0.5 (47 aa).

A signal peptide spans 1 to 23 (MYMLTIGLLTALGLAVGASFGKA). Residues 24 to 43 (LGVAVGSYFTACIIIGIIKG) form a helical membrane-spanning segment.

Its subcellular location is the host membrane. The chain is Protein 0.5 from Escherichia phage T7 (Bacteriophage T7).